Consider the following 89-residue polypeptide: Small ribosomal subunit protein bS20 (89 aa).

The segment covering 1–12 has biased composition (basic residues); it reads MANIKSAKKRAK. The tract at residues 1 to 22 is disordered; the sequence is MANIKSAKKRAKQTIVRNERNT.

This sequence belongs to the bacterial ribosomal protein bS20 family.

In terms of biological role, binds directly to 16S ribosomal RNA. This Xanthomonas oryzae pv. oryzae (strain KACC10331 / KXO85) protein is Small ribosomal subunit protein bS20.